Reading from the N-terminus, the 102-residue chain is Iron-sulfur cluster assembly protein CyaY (102 aa).

Belongs to the frataxin family.

In terms of biological role, involved in iron-sulfur (Fe-S) cluster assembly. May act as a regulator of Fe-S biogenesis. The protein is Iron-sulfur cluster assembly protein CyaY of Pasteurella multocida (strain Pm70).